We begin with the raw amino-acid sequence, 438 residues long: Glutaryl-CoA dehydrogenase, mitochondrial (438 aa).

A mitochondrion-targeting transit peptide spans 1–44 (MALRGVSVQLLSRVPGLRVFRTWVSSAAQTEKVGRTQSQLAKSS). Substrate contacts are provided by residues 138 to 139 (RS) and serine 186. Residues 177 to 186 (FGLTEPNSGS), serine 186, and 212 to 214 (WIT) each bind FAD. Position 240 is an N6-acetyllysine (lysine 240). 287–294 (FGCLNNGR) contacts substrate. Residues arginine 319, glutamine 330, and 387-391 (DMLGG) contribute to the FAD site. The active-site Proton acceptor is the glutamate 414. Glycine 415 serves as a coordination point for substrate. FAD contacts are provided by residues threonine 416, 416–418 (THD), and phenylalanine 434.

This sequence belongs to the acyl-CoA dehydrogenase family. In terms of assembly, homotetramer. FAD serves as cofactor.

The protein resides in the mitochondrion matrix. It carries out the reaction glutaryl-CoA + oxidized [electron-transfer flavoprotein] + 2 H(+) = (2E)-butenoyl-CoA + reduced [electron-transfer flavoprotein] + CO2. The protein operates within amino-acid metabolism; lysine degradation. Its pathway is amino-acid metabolism; tryptophan metabolism. Its function is as follows. Catalyzes the oxidative decarboxylation of glutaryl-CoA to crotonyl-CoA and CO(2) in the degradative pathway of L-lysine, L-hydroxylysine, and L-tryptophan metabolism. It uses electron transfer flavoprotein as its electron acceptor. This is Glutaryl-CoA dehydrogenase, mitochondrial (GCDH) from Macaca fascicularis (Crab-eating macaque).